Reading from the N-terminus, the 404-residue chain is NADH-quinone oxidoreductase subunit D 1 (404 aa).

Belongs to the complex I 49 kDa subunit family. As to quaternary structure, NDH-1 is composed of 14 different subunits. Subunits NuoB, C, D, E, F, and G constitute the peripheral sector of the complex.

It localises to the cell membrane. It catalyses the reaction a quinone + NADH + 5 H(+)(in) = a quinol + NAD(+) + 4 H(+)(out). Its function is as follows. NDH-1 shuttles electrons from NADH, via FMN and iron-sulfur (Fe-S) centers, to quinones in the respiratory chain. The immediate electron acceptor for the enzyme in this species is believed to be a menaquinone. Couples the redox reaction to proton translocation (for every two electrons transferred, four hydrogen ions are translocated across the cytoplasmic membrane), and thus conserves the redox energy in a proton gradient. The protein is NADH-quinone oxidoreductase subunit D 1 of Symbiobacterium thermophilum (strain DSM 24528 / JCM 14929 / IAM 14863 / T).